The sequence spans 170 residues: Viral interleukin-10 homolog (170 aa).

A signal peptide spans 1-23; it reads MERRLVVTLQCLVLLYLAPECGG. 2 disulfide bridges follow: Cys-27–Cys-119 and Cys-73–Cys-125. The stretch at 97 to 145 forms a coiled coil; that stretch reads EAKDHVNSLGENLKTLRLRLRRCHRFLPCENKSKAVEQIKNAFNKLQEK. The N-linked (GlcNAc...) asparagine; by host glycan is linked to Asn-127.

Belongs to the IL-10 family. Homodimer.

The protein localises to the secreted. Its function is as follows. Inhibits IFN-gamma synthesis. Down-regulates the expression of the host TAP1 gene (transporter associated with antigen processing), thereby affecting the transport of peptides into the endoplasmic reticulum and subsequent peptide loading by MHC class I molecules. In consequence, infected cells are masked for immune recognition by cytotoxic T-lymphocytes. This is Viral interleukin-10 homolog from Epstein-Barr virus (strain AG876) (HHV-4).